A 264-amino-acid chain; its full sequence is MAAAAGGGTREEMVYMAKLAEQAERYEEMVEFMEKVVTAAAAGGGGELTVEERNLLSVAYKNVIGARRASWRIVSSIEQKEEGRGAAGHAAAARSYRARVEAELSNICAGILRLLDERLVPAAAAVDAKVFYLKMKGDYHRYLAEFKTGAERKDAADATLAAYQAAQDIAMKELSPTHPIRLGLALNFSVFYYEILNSPDRACTLAKQAFDEAISELDTLGEESYKDSTLIMQLLRDNLTLWTSDMQDDGGDEMRDATKPEDEH.

Residues 245–264 are disordered; it reads DMQDDGGDEMRDATKPEDEH. Residues 252–264 show a composition bias toward basic and acidic residues; the sequence is DEMRDATKPEDEH.

This sequence belongs to the 14-3-3 family.

Its function is as follows. Is associated with a DNA binding complex that binds to the G box, a well-characterized cis-acting DNA regulatory element found in plant genes. The chain is 14-3-3-like protein GF14-A (GF14A) from Oryza sativa subsp. japonica (Rice).